The following is a 324-amino-acid chain: Fructose-1,6-bisphosphatase class 1 (324 aa).

Mg(2+)-binding residues include Glu88, Asp107, Leu109, and Asp110. Substrate is bound by residues 110–113 (DGSS), Asn199, and Lys265. Glu271 is a binding site for Mg(2+).

It belongs to the FBPase class 1 family. Homotetramer. Mg(2+) serves as cofactor.

The protein resides in the cytoplasm. The catalysed reaction is beta-D-fructose 1,6-bisphosphate + H2O = beta-D-fructose 6-phosphate + phosphate. It functions in the pathway carbohydrate biosynthesis; gluconeogenesis. The protein is Fructose-1,6-bisphosphatase class 1 of Neisseria meningitidis serogroup A / serotype 4A (strain DSM 15465 / Z2491).